We begin with the raw amino-acid sequence, 436 residues long: Autophagy-related protein 18 (436 aa).

3 WD repeats span residues 192–232 (AHRS…KLYQ), 237–276 (SMPS…SSPD), and 374–414 (GNNG…GGEG). The L/FRRG motif signature appears at 233 to 237 (FRRGS). Residues 268–315 (LSHPTSSPDTSPSSPVGRDRSLSQSSSGYSPDRGDLTGDVGSSDFPAR) form a disordered region. Residues 269–282 (SHPTSSPDTSPSSP) show a composition bias toward low complexity.

The protein belongs to the WD repeat PROPPIN family. As to quaternary structure, component of the PI(3,5)P2 regulatory complex.

The protein localises to the preautophagosomal structure membrane. The protein resides in the vacuole membrane. Its subcellular location is the endosome membrane. Functionally, the PI(3,5)P2 regulatory complex regulates both the synthesis and turnover of phosphatidylinositol 3,5-bisphosphate (PtdIns(3,5)P2). Necessary for proper vacuole morphology. Plays an important role in osmotically-induced vacuole fragmentation. Required for cytoplasm to vacuole transport (Cvt) vesicle formation, pexophagy and starvation-induced autophagy. Involved in correct atg9 trafficking to the pre-autophagosomal structure. Might also be involved in premeiotic DNA replication. The chain is Autophagy-related protein 18 (atg18) from Aspergillus fumigatus (strain ATCC MYA-4609 / CBS 101355 / FGSC A1100 / Af293) (Neosartorya fumigata).